A 121-amino-acid polypeptide reads, in one-letter code: Large ribosomal subunit protein bL19 (121 aa).

The protein belongs to the bacterial ribosomal protein bL19 family.

This protein is located at the 30S-50S ribosomal subunit interface and may play a role in the structure and function of the aminoacyl-tRNA binding site. The chain is Large ribosomal subunit protein bL19 from Chlorobium phaeovibrioides (strain DSM 265 / 1930) (Prosthecochloris vibrioformis (strain DSM 265)).